Here is a 392-residue protein sequence, read N- to C-terminus: Formate-dependent phosphoribosylglycinamide formyltransferase (392 aa).

N(1)-(5-phospho-beta-D-ribosyl)glycinamide-binding positions include 22 to 23 (EL) and Glu-82. ATP is bound by residues Arg-114, Lys-155, 160–165 (SSGKGQ), 195–198 (EGVV), and Glu-203. Positions 119–308 (RLAAEELGLP…EFALHVRAFL (190 aa)) constitute an ATP-grasp domain. Mg(2+) is bound by residues Glu-267 and Glu-279. Residues Asp-286, Lys-355, and 362-363 (RR) contribute to the N(1)-(5-phospho-beta-D-ribosyl)glycinamide site.

Belongs to the PurK/PurT family. As to quaternary structure, homodimer.

It catalyses the reaction N(1)-(5-phospho-beta-D-ribosyl)glycinamide + formate + ATP = N(2)-formyl-N(1)-(5-phospho-beta-D-ribosyl)glycinamide + ADP + phosphate + H(+). The protein operates within purine metabolism; IMP biosynthesis via de novo pathway; N(2)-formyl-N(1)-(5-phospho-D-ribosyl)glycinamide from N(1)-(5-phospho-D-ribosyl)glycinamide (formate route): step 1/1. Its function is as follows. Involved in the de novo purine biosynthesis. Catalyzes the transfer of formate to 5-phospho-ribosyl-glycinamide (GAR), producing 5-phospho-ribosyl-N-formylglycinamide (FGAR). Formate is provided by PurU via hydrolysis of 10-formyl-tetrahydrofolate. The protein is Formate-dependent phosphoribosylglycinamide formyltransferase of Salmonella choleraesuis (strain SC-B67).